The sequence spans 215 residues: Thiamine-phosphate synthase 1 (215 aa).

4-amino-2-methyl-5-(diphosphooxymethyl)pyrimidine contacts are provided by residues 35–39 and Asn67; that span reads QYRFE. Mg(2+) contacts are provided by Asp68 and Asp87. Thr106 contacts 4-amino-2-methyl-5-(diphosphooxymethyl)pyrimidine. Residue 132 to 134 participates in 2-[(2R,5Z)-2-carboxy-4-methylthiazol-5(2H)-ylidene]ethyl phosphate binding; that stretch reads TST. Lys135 lines the 4-amino-2-methyl-5-(diphosphooxymethyl)pyrimidine pocket. Position 162 (Gly162) interacts with 2-[(2R,5Z)-2-carboxy-4-methylthiazol-5(2H)-ylidene]ethyl phosphate.

The protein belongs to the thiamine-phosphate synthase family. Requires Mg(2+) as cofactor.

The enzyme catalyses 2-[(2R,5Z)-2-carboxy-4-methylthiazol-5(2H)-ylidene]ethyl phosphate + 4-amino-2-methyl-5-(diphosphooxymethyl)pyrimidine + 2 H(+) = thiamine phosphate + CO2 + diphosphate. It carries out the reaction 2-(2-carboxy-4-methylthiazol-5-yl)ethyl phosphate + 4-amino-2-methyl-5-(diphosphooxymethyl)pyrimidine + 2 H(+) = thiamine phosphate + CO2 + diphosphate. The catalysed reaction is 4-methyl-5-(2-phosphooxyethyl)-thiazole + 4-amino-2-methyl-5-(diphosphooxymethyl)pyrimidine + H(+) = thiamine phosphate + diphosphate. The protein operates within cofactor biosynthesis; thiamine diphosphate biosynthesis; thiamine phosphate from 4-amino-2-methyl-5-diphosphomethylpyrimidine and 4-methyl-5-(2-phosphoethyl)-thiazole: step 1/1. Its function is as follows. Condenses 4-methyl-5-(beta-hydroxyethyl)thiazole monophosphate (THZ-P) and 2-methyl-4-amino-5-hydroxymethyl pyrimidine pyrophosphate (HMP-PP) to form thiamine monophosphate (TMP). The sequence is that of Thiamine-phosphate synthase 1 from Aquifex aeolicus (strain VF5).